A 127-amino-acid chain; its full sequence is UPF0389 protein GA21628 (127 aa).

The helical transmembrane segment at 69 to 88 (IRLANIMIALTVIGCGIMVY) threads the bilayer.

The protein belongs to the UPF0389 family.

It is found in the membrane. The chain is UPF0389 protein GA21628 from Drosophila pseudoobscura pseudoobscura (Fruit fly).